We begin with the raw amino-acid sequence, 298 residues long: Ethanolamine ammonia-lyase small subunit (298 aa).

The interval 15 to 43 (ASMGQDVPQPVAPSTQEGAKPQRAAPTAT) is disordered. Valine 210, glutamate 231, and cysteine 261 together coordinate adenosylcob(III)alamin.

Belongs to the EutC family. As to quaternary structure, the basic unit is a heterodimer which dimerizes to form tetramers. The heterotetramers trimerize; 6 large subunits form a core ring with 6 small subunits projecting outwards. Requires adenosylcob(III)alamin as cofactor.

The protein resides in the bacterial microcompartment. It catalyses the reaction ethanolamine = acetaldehyde + NH4(+). It functions in the pathway amine and polyamine degradation; ethanolamine degradation. Functionally, catalyzes the deamination of various vicinal amino-alcohols to oxo compounds. Allows this organism to utilize ethanolamine as the sole source of nitrogen and carbon in the presence of external vitamin B12. The protein is Ethanolamine ammonia-lyase small subunit of Salmonella arizonae (strain ATCC BAA-731 / CDC346-86 / RSK2980).